The chain runs to 319 residues: Acetyl-coenzyme A carboxylase carboxyl transferase subunit alpha (319 aa).

Residues 32-293 (NVDIEVRALE…KAVLLNELEA (262 aa)) enclose the CoA carboxyltransferase C-terminal domain.

Belongs to the AccA family. As to quaternary structure, acetyl-CoA carboxylase is a heterohexamer composed of biotin carboxyl carrier protein (AccB), biotin carboxylase (AccC) and two subunits each of ACCase subunit alpha (AccA) and ACCase subunit beta (AccD).

The protein localises to the cytoplasm. It catalyses the reaction N(6)-carboxybiotinyl-L-lysyl-[protein] + acetyl-CoA = N(6)-biotinyl-L-lysyl-[protein] + malonyl-CoA. It functions in the pathway lipid metabolism; malonyl-CoA biosynthesis; malonyl-CoA from acetyl-CoA: step 1/1. Component of the acetyl coenzyme A carboxylase (ACC) complex. First, biotin carboxylase catalyzes the carboxylation of biotin on its carrier protein (BCCP) and then the CO(2) group is transferred by the carboxyltransferase to acetyl-CoA to form malonyl-CoA. The chain is Acetyl-coenzyme A carboxylase carboxyl transferase subunit alpha from Xylella fastidiosa (strain Temecula1 / ATCC 700964).